Here is a 440-residue protein sequence, read N- to C-terminus: MSEFSQTVPELVAWARKNDFSISLPVDRLSFLLAVATLNGERLDGEMSEGELVDAFRHVSDAFEQTSETIGVRANNAINDMVRQRLLNRFTSEQAEGNAIYRLTPLGIGITDYYIRQREFSTLRLSMQLSIVAGELKRAADAAAEGGDEFHWHRNVYAPLKYSVAEIFDSIDLTQRIMDEQQQQVKDDIAQLLNKDWRAAISSCELLLSETSGTLRELQDTLEAAGDKLQANLLRIQDATMTHDDLHVVDRLVFDLQSKLDRIISWGQQSIDLWIGYDRHVHKFIRTAIDMDKNRVFAQRLRQSVQTYFDDPWALTYANADRLLDMRDEEMALRDDEVTGEFPPDLEYEEFNEIREQLAAIIEEQLAIYKTRQTPLDLGLVVREYLAQYPRARHFDVARIVIDQAVRLGVAQADFTGLPAKWQPINDYGAKVQAHVIDKY.

The tract at residues 208–236 (LSETSGTLRELQDTLEAAGDKLQANLLRI) is leucine-zipper.

The protein belongs to the MukF family. As to quaternary structure, interacts, and probably forms a ternary complex, with MukE and MukB via its C-terminal region. The complex formation is stimulated by calcium or magnesium. It is required for an interaction between MukE and MukB.

The protein localises to the cytoplasm. It is found in the nucleoid. Involved in chromosome condensation, segregation and cell cycle progression. May participate in facilitating chromosome segregation by condensation DNA from both sides of a centrally located replisome during cell division. Not required for mini-F plasmid partitioning. Probably acts via its interaction with MukB and MukE. Overexpression results in anucleate cells. It has a calcium binding activity. The protein is Chromosome partition protein MukF of Salmonella gallinarum (strain 287/91 / NCTC 13346).